A 286-amino-acid polypeptide reads, in one-letter code: UDP-3-O-acyl-N-acetylglucosamine deacetylase (286 aa).

3 residues coordinate Zn(2+): His81, His240, and Asp244. His266 acts as the Proton donor in catalysis.

The protein belongs to the LpxC family. The cofactor is Zn(2+).

It catalyses the reaction a UDP-3-O-[(3R)-3-hydroxyacyl]-N-acetyl-alpha-D-glucosamine + H2O = a UDP-3-O-[(3R)-3-hydroxyacyl]-alpha-D-glucosamine + acetate. It participates in glycolipid biosynthesis; lipid IV(A) biosynthesis; lipid IV(A) from (3R)-3-hydroxytetradecanoyl-[acyl-carrier-protein] and UDP-N-acetyl-alpha-D-glucosamine: step 2/6. In terms of biological role, catalyzes the hydrolysis of UDP-3-O-myristoyl-N-acetylglucosamine to form UDP-3-O-myristoylglucosamine and acetate, the committed step in lipid A biosynthesis. This chain is UDP-3-O-acyl-N-acetylglucosamine deacetylase, found in Francisella tularensis subsp. tularensis (strain FSC 198).